The sequence spans 346 residues: tRNA N6-adenosine threonylcarbamoyltransferase (346 aa).

Fe cation is bound by residues His-111 and His-115. Residues 134 to 138 (LVSGG), Asp-167, Gly-180, and Asn-279 each bind substrate. Residue Asp-307 participates in Fe cation binding.

The protein belongs to the KAE1 / TsaD family. Fe(2+) serves as cofactor.

It is found in the cytoplasm. It catalyses the reaction L-threonylcarbamoyladenylate + adenosine(37) in tRNA = N(6)-L-threonylcarbamoyladenosine(37) in tRNA + AMP + H(+). Required for the formation of a threonylcarbamoyl group on adenosine at position 37 (t(6)A37) in tRNAs that read codons beginning with adenine. Is involved in the transfer of the threonylcarbamoyl moiety of threonylcarbamoyl-AMP (TC-AMP) to the N6 group of A37, together with TsaE and TsaB. TsaD likely plays a direct catalytic role in this reaction. The chain is tRNA N6-adenosine threonylcarbamoyltransferase from Burkholderia vietnamiensis (strain G4 / LMG 22486) (Burkholderia cepacia (strain R1808)).